The primary structure comprises 139 residues: Tetra-peptide repeat homeobox-like protein (139 aa).

Disordered regions lie at residues 1–22 (MQDPRHPQGLPLSPGLPKRQRQ) and 78–139 (ERWF…QQPQ). The segment at residues 20 to 79 (QRQDRTIYNWKQQEVLENHFKEEQYPDYDTRQELAEMLNLREYQVQVWFKNRRAKRSRER) is a DNA-binding region (homeobox). Residues 82-139 (QKQLQQLQKHPQQQHPQQQHPQQQLQQQQPQQQPQQQQPQQQPQQQQPQQQQLHQQPQ) are compositionally biased toward low complexity.

Belongs to the paired homeobox family.

Its subcellular location is the nucleus. Functionally, transcription factor required for zygotic genome activation (ZGA), a critical event in early embryonic development during which the developmental control passes from maternally provided mRNAs to the expression of the zygotic genome after fertilization. Protein produced from maternal transcripts that binds and activates expression of key ZGA marker genes, such as NANOGNB, ZSCAN4, DUXB, KLF5 and DPPA3. Binds to regulatory DNA sequences containing a 5'-TAATCC-3' sequence motif. The sequence is that of Tetra-peptide repeat homeobox-like protein from Homo sapiens (Human).